The chain runs to 137 residues: Cofilin (137 aa).

Residues 5 to 135 (GVKVSPECLE…AYETVLEKVT (131 aa)) enclose the ADF-H domain.

This sequence belongs to the actin-binding proteins ADF family.

The protein localises to the cytoplasm. It localises to the cytoskeleton. The protein resides in the nucleus matrix. In terms of biological role, controls reversibly actin polymerization and depolymerization in a pH-sensitive manner. It has the ability to bind G- and F-actin in a 1:1 ratio of cofilin to actin. Binding to F-actin is regulated by tropomyosin. It is the major component of intranuclear and cytoplasmic actin rods. Required for accumulation of actin at the cell division site via depolymerizing actin at the cell ends. In association with myosin II has a role in the assembly of the contractile ring via severing actin filaments. Involved in the maintenance of the contractile ring once formed. In association with profilin and capping protein, has a role in the mitotic reorganization of the actin cytoskeleton. Severs actin filaments (F-actin). The chain is Cofilin (cof1) from Schizosaccharomyces pombe (strain 972 / ATCC 24843) (Fission yeast).